Consider the following 231-residue polypeptide: DNA mismatch repair protein MutH (231 aa).

This sequence belongs to the MutH family.

It is found in the cytoplasm. In terms of biological role, sequence-specific endonuclease that cleaves unmethylated GATC sequences. It is involved in DNA mismatch repair. The chain is DNA mismatch repair protein MutH from Klebsiella pneumoniae (strain 342).